The following is a 973-amino-acid chain: Serine/threonine-protein kinase atg1 (973 aa).

One can recognise a Protein kinase domain in the interval 23–328; the sequence is YTRLDEIGRG…FPDFFQNGVI (306 aa). Residues 29–37 and lysine 52 each bind ATP; that span reads IGRGSFATV. Catalysis depends on aspartate 166, which acts as the Proton acceptor. Disordered stretches follow at residues 338-446, 460-482, 523-587, and 949-973; these read DDLP…PGRQ, RQKG…DKLR, GNIS…QSPT, and PTPS…TPPK. Residues 387–407 show a composition bias toward polar residues; it reads GLTQRPPSQNQRFGTPQTTTP. The span at 523–537 shows a compositional bias: polar residues; that stretch reads GNISRGAQTGALSRR. The segment covering 566-582 has biased composition (basic and acidic residues); sequence SRADSMHNRQGSYERRY. Positions 951–965 are enriched in polar residues; the sequence is PSANVPSKMASSNPV.

It belongs to the protein kinase superfamily. Ser/Thr protein kinase family. APG1/unc-51/ULK1 subfamily. Homodimer. Forms a ternary complex with ATG13 and ATG17.

The protein resides in the cytoplasm. It localises to the preautophagosomal structure membrane. The catalysed reaction is L-seryl-[protein] + ATP = O-phospho-L-seryl-[protein] + ADP + H(+). The enzyme catalyses L-threonyl-[protein] + ATP = O-phospho-L-threonyl-[protein] + ADP + H(+). In terms of biological role, serine/threonine protein kinase involved in the cytoplasm to vacuole transport (Cvt) and found to be essential in autophagy, where it is required for the formation of autophagosomes. Involved in the clearance of protein aggregates which cannot be efficiently cleared by the proteasome. Required for selective autophagic degradation of the nucleus (nucleophagy) as well as for mitophagy which contributes to regulate mitochondrial quantity and quality by eliminating the mitochondria to a basal level to fulfill cellular energy requirements and preventing excess ROS production. Also involved in endoplasmic reticulum-specific autophagic process, in selective removal of ER-associated degradation (ERAD) substrates. Plays a key role in ATG9 and ATG23 cycling through the pre-autophagosomal structure and is necessary to promote ATG18 binding to ATG9 through phosphorylation of ATG9. Catalyzes phosphorylation of ATG4, decreasing the interaction between ATG4 and ATG8 and impairing deconjugation of PE-conjugated forms of ATG8. The protein is Serine/threonine-protein kinase atg1 of Aspergillus fumigatus (strain ATCC MYA-4609 / CBS 101355 / FGSC A1100 / Af293) (Neosartorya fumigata).